The sequence spans 132 residues: Small ribosomal subunit protein uS11 (132 aa).

It belongs to the universal ribosomal protein uS11 family. As to quaternary structure, part of the 30S ribosomal subunit.

Functionally, located on the platform of the 30S subunit. This is Small ribosomal subunit protein uS11 (rps11) from Korarchaeum cryptofilum (strain OPF8).